A 159-amino-acid chain; its full sequence is Transcription elongation factor GreA (159 aa).

A coiled-coil region spans residues S44–I75.

It belongs to the GreA/GreB family.

Its function is as follows. Necessary for efficient RNA polymerase transcription elongation past template-encoded arresting sites. The arresting sites in DNA have the property of trapping a certain fraction of elongating RNA polymerases that pass through, resulting in locked ternary complexes. Cleavage of the nascent transcript by cleavage factors such as GreA or GreB allows the resumption of elongation from the new 3'terminus. GreA releases sequences of 2 to 3 nucleotides. The polypeptide is Transcription elongation factor GreA (Chlorobium limicola (strain DSM 245 / NBRC 103803 / 6330)).